The following is a 233-amino-acid chain: Uracil-DNA glycosylase (233 aa).

Residue Asp-70 is the Proton acceptor of the active site.

It belongs to the uracil-DNA glycosylase (UDG) superfamily. UNG family.

Its subcellular location is the cytoplasm. It carries out the reaction Hydrolyzes single-stranded DNA or mismatched double-stranded DNA and polynucleotides, releasing free uracil.. In terms of biological role, excises uracil residues from the DNA which can arise as a result of misincorporation of dUMP residues by DNA polymerase or due to deamination of cytosine. In Helicobacter pylori (strain P12), this protein is Uracil-DNA glycosylase.